Consider the following 391-residue polypeptide: Tryptophan synthase beta chain 2 (391 aa).

Residue Lys83 is modified to N6-(pyridoxal phosphate)lysine.

Belongs to the TrpB family. As to quaternary structure, tetramer of two alpha and two beta chains. Pyridoxal 5'-phosphate is required as a cofactor.

The catalysed reaction is (1S,2R)-1-C-(indol-3-yl)glycerol 3-phosphate + L-serine = D-glyceraldehyde 3-phosphate + L-tryptophan + H2O. It functions in the pathway amino-acid biosynthesis; L-tryptophan biosynthesis; L-tryptophan from chorismate: step 5/5. In terms of biological role, the beta subunit is responsible for the synthesis of L-tryptophan from indole and L-serine. This chain is Tryptophan synthase beta chain 2 (trpB2), found in Chlamydia caviae (strain ATCC VR-813 / DSM 19441 / 03DC25 / GPIC) (Chlamydophila caviae).